The following is a 263-amino-acid chain: Putative SNAP25 homologous protein SNAP30 (263 aa).

Disordered regions lie at residues 1–61 (MFGF…LQSQ) and 132–209 (NLGG…DGLS). 2 stretches are compositionally biased toward polar residues: residues 8-34 (PGNN…TSSE) and 52-61 (FNDSGGLQSQ). Residues 158-173 (KPSKKSENHKEEREKL) show a composition bias toward basic and acidic residues. The span at 180–194 (RSSSQPALDQPTNAL) shows a compositional bias: polar residues. Positions 197 to 206 (VEQEKAKQDD) are enriched in basic and acidic residues. Positions 198–260 (EQEKAKQDDG…QGANQRARHL (63 aa)) constitute a t-SNARE coiled-coil homology domain.

It belongs to the SNAP-25 family.

It localises to the membrane. The protein localises to the cytoplasm. Its function is as follows. Vesicle trafficking protein that functions in the secretory pathway. This chain is Putative SNAP25 homologous protein SNAP30 (SNAP30), found in Arabidopsis thaliana (Mouse-ear cress).